The sequence spans 397 residues: MAFLKLTEQNVRGKTVLIRADMNVPFKGGKISDDTRIRASLASVKYCLDNGASVIVMTHLGRPTEGEFHPEDDVAPVAAHLGGLLGKDVKVLNDWRENKPALNAGDVVMLQNVRINKGEKKNDLELGKAYAALCDVFVNDAFGTAHRAQASTEAVAQAAPVACAGVLMAGELDALGKALKQPARPMVAIVAGSKVSTKLTILESLADKVDQLIVGGGIANTFLLAEGKAIGKSLAEHDLVEESKKIMAKMAAKGGSVPLPTDVVVAKAFAADAEAVVKDIADVAEDEMILDIGPKSAAALAELLKAAGTVVWNGPVGVFEFDQFAGGTKALAEAIAQSKAFSIAGGGDTLAAIAKFGVTEQIGYISTGGGAFLEFLEGKELPAVAALEKTRRVNGLI.

Substrate is bound by residues 21 to 23 (DMN), Arg-36, 59 to 62 (HLGR), Arg-114, and Arg-147. Residues Lys-198, Glu-320, and 346–349 (GGDT) each bind ATP.

The protein belongs to the phosphoglycerate kinase family. Monomer.

It is found in the cytoplasm. The catalysed reaction is (2R)-3-phosphoglycerate + ATP = (2R)-3-phospho-glyceroyl phosphate + ADP. Its pathway is carbohydrate degradation; glycolysis; pyruvate from D-glyceraldehyde 3-phosphate: step 2/5. In Neisseria gonorrhoeae (strain NCCP11945), this protein is Phosphoglycerate kinase.